The sequence spans 202 residues: Adenylyl-sulfate kinase (202 aa).

ATP is bound at residue Gly-31–Ser-38. Ser-105 serves as the catalytic Phosphoserine intermediate.

This sequence belongs to the APS kinase family.

It carries out the reaction adenosine 5'-phosphosulfate + ATP = 3'-phosphoadenylyl sulfate + ADP + H(+). The protein operates within sulfur metabolism; hydrogen sulfide biosynthesis; sulfite from sulfate: step 2/3. Its function is as follows. Catalyzes the synthesis of activated sulfate. This chain is Adenylyl-sulfate kinase (MET14), found in Saccharomyces bayanus (Yeast).